The primary structure comprises 213 residues: Octanoyltransferase (213 aa).

In terms of domain architecture, BPL/LPL catalytic spans 32 to 207 (ESTLDEIWLV…NILALLNNPD (176 aa)). Substrate contacts are provided by residues 71-78 (RGGQVTYH), 138-140 (SLG), and 151-153 (GLA). Cys-169 (acyl-thioester intermediate) is an active-site residue.

It belongs to the LipB family.

The protein localises to the cytoplasm. The enzyme catalyses octanoyl-[ACP] + L-lysyl-[protein] = N(6)-octanoyl-L-lysyl-[protein] + holo-[ACP] + H(+). The protein operates within protein modification; protein lipoylation via endogenous pathway; protein N(6)-(lipoyl)lysine from octanoyl-[acyl-carrier-protein]: step 1/2. Catalyzes the transfer of endogenously produced octanoic acid from octanoyl-acyl-carrier-protein onto the lipoyl domains of lipoate-dependent enzymes. Lipoyl-ACP can also act as a substrate although octanoyl-ACP is likely to be the physiological substrate. This chain is Octanoyltransferase, found in Escherichia coli O17:K52:H18 (strain UMN026 / ExPEC).